The sequence spans 859 residues: DNA (cytosine-5)-methyltransferase 3B (859 aa).

The tract at residues 1-305 is interaction with DNMT1 and DNMT3A; sequence MKGDSRHLNE…LATFNKLVSY (305 aa). The disordered stretch occupies residues 25–226; it reads GNFSDQSSDT…RDGDSTEYQD (202 aa). Positions 85–94 are enriched in acidic residues; it reads DRDDEVDDGN. Serine 96 is subject to Phosphoserine. Lysine 102 is covalently cross-linked (Glycyl lysine isopeptide (Lys-Gly) (interchain with G-Cter in SUMO2)). The segment covering 103-114 has biased composition (basic and acidic residues); the sequence is LTRETKDTRTRS. A Phosphothreonine modification is found at threonine 112. Phosphoserine is present on serine 116. Residues 167 to 179 are compositionally biased toward low complexity; the sequence is SSSASTPWSSPAS. The span at 189 to 198 shows a compositional bias: polar residues; sequence KSVSTPSVDL. Residues 214–226 are compositionally biased toward basic and acidic residues; that stretch reads AESRDGDSTEYQD. Phosphoserine is present on serine 216. In terms of domain architecture, PWWP spans 232-290; that stretch reads IGDLVWGKIKGFSWWPAMVVSWKATSKRQAMPGMRWVQWFGDGKFSEISADKLVALGLF. The segment at 348–429 is disordered; that stretch reads KPTGIEGLKP…ESRERMASEV (82 aa). 2 stretches are compositionally biased toward basic and acidic residues: residues 370–381 and 412–426; these read RRSDSRNLEPRR and GKDR…ERMA. Arginine 415 carries the citrulline modification. One can recognise an ADD domain in the interval 428–560; sequence EVTNNKGNLE…LQDFFTTDPD (133 aa). The GATA-type; atypical zinc finger occupies 439–469; it reads RCLSCGKKNPVSFHPLFEGGLCQSCRDRFLE. The segment at 440 to 532 is interaction with the PRC2/EED-EZH2 complex; the sequence is CLSCGKKNPV…LQEPWSCYMC (93 aa). A PHD-type; atypical zinc finger spans residues 480 to 536; it reads QSYCTVCCEGRELLLCSNTSCCRCFCVECLEVLVGAGTAEDAKLQEPWSCYMCLPQR. Positions 581-859 constitute an SAM-dependent MTase C5-type domain; that stretch reads IRVLSLFDGI…APLKDYFACE (279 aa). Residues 588 to 592 and glutamate 611 each bind S-adenosyl-L-methionine; that span reads DGIAT. Residue lysine 623 forms a Glycyl lysine isopeptide (Lys-Gly) (interchain with G-Cter in SUMO2) linkage. 633-635 contacts S-adenosyl-L-methionine; sequence DVR. Cysteine 657 is a catalytic residue. An S-adenosyl-L-methionine-binding site is contributed by 838–840; that stretch reads RSW.

Belongs to the class I-like SAM-binding methyltransferase superfamily. C5-methyltransferase family. In terms of assembly, interacts with CBX4, DNMT1, DNMT3A, SETDB1, UBE2I9, UBL1 and ZHX1. Interacts with SUV39H1 and BAZ2A/TIP5. Interacts with the PRC2/EED-EZH2 complex. Interacts with UHRF1. Sumoylated. Post-translationally, citrullinated by PADI4.

The protein localises to the nucleus. It catalyses the reaction a 2'-deoxycytidine in DNA + S-adenosyl-L-methionine = a 5-methyl-2'-deoxycytidine in DNA + S-adenosyl-L-homocysteine + H(+). Its activity is regulated as follows. Activated by binding to the regulatory factor DNMT3L. In terms of biological role, required for genome-wide de novo methylation and is essential for the establishment of DNA methylation patterns during development. DNA methylation is coordinated with methylation of histones. May preferentially methylates nucleosomal DNA within the nucleosome core region. May function as transcriptional co-repressor by associating with CBX4 and independently of DNA methylation. Seems to be involved in gene silencing. In association with DNMT1 and via the recruitment of CTCFL/BORIS, involved in activation of BAG1 gene expression by modulating dimethylation of promoter histone H3 at H3K4 and H3K9. Functions as a transcriptional corepressor by associating with ZHX1. Required for DUX4 silencing in somatic cells. The chain is DNA (cytosine-5)-methyltransferase 3B (Dnmt3b) from Mus musculus (Mouse).